The sequence spans 396 residues: NADH-quinone oxidoreductase subunit D (396 aa).

This sequence belongs to the complex I 49 kDa subunit family. In terms of assembly, NDH-1 is composed of 14 different subunits. Subunits NuoB, C, D, E, F, and G constitute the peripheral sector of the complex.

It is found in the cell inner membrane. It catalyses the reaction a quinone + NADH + 5 H(+)(in) = a quinol + NAD(+) + 4 H(+)(out). NDH-1 shuttles electrons from NADH, via FMN and iron-sulfur (Fe-S) centers, to quinones in the respiratory chain. The immediate electron acceptor for the enzyme in this species is believed to be ubiquinone. Couples the redox reaction to proton translocation (for every two electrons transferred, four hydrogen ions are translocated across the cytoplasmic membrane), and thus conserves the redox energy in a proton gradient. This is NADH-quinone oxidoreductase subunit D from Methylorubrum populi (strain ATCC BAA-705 / NCIMB 13946 / BJ001) (Methylobacterium populi).